Reading from the N-terminus, the 164-residue chain is NADH-quinone oxidoreductase subunit I (164 aa).

4Fe-4S ferredoxin-type domains lie at 54–84 (LRRY…IEAG) and 95–124 (VRYD…EGPN). Residues C64, C67, C70, C74, C104, C107, C110, and C114 each contribute to the [4Fe-4S] cluster site.

Belongs to the complex I 23 kDa subunit family. As to quaternary structure, NDH-1 is composed of 14 different subunits. Subunits NuoA, H, J, K, L, M, N constitute the membrane sector of the complex. Requires [4Fe-4S] cluster as cofactor.

The protein localises to the cell inner membrane. The enzyme catalyses a quinone + NADH + 5 H(+)(in) = a quinol + NAD(+) + 4 H(+)(out). NDH-1 shuttles electrons from NADH, via FMN and iron-sulfur (Fe-S) centers, to quinones in the respiratory chain. The immediate electron acceptor for the enzyme in this species is believed to be ubiquinone. Couples the redox reaction to proton translocation (for every two electrons transferred, four hydrogen ions are translocated across the cytoplasmic membrane), and thus conserves the redox energy in a proton gradient. The protein is NADH-quinone oxidoreductase subunit I of Mesorhizobium japonicum (strain LMG 29417 / CECT 9101 / MAFF 303099) (Mesorhizobium loti (strain MAFF 303099)).